We begin with the raw amino-acid sequence, 583 residues long: Aspartyl protease APCB1 (583 aa).

The helical transmembrane segment at Leu-83 to Pro-103 threads the bilayer. Residues Tyr-203 to Met-564 enclose the Peptidase A1 domain. Residues Asp-223 and Asp-431 contribute to the active site.

Belongs to the peptidase A1 family. In terms of assembly, interacts with BAG6 and BAGP1.

It is found in the membrane. Functionally, involved in proteolytic processing of BAG6 and plant basal immunity. The chain is Aspartyl protease APCB1 from Arabidopsis thaliana (Mouse-ear cress).